Reading from the N-terminus, the 151-residue chain is uncharacterized protein (151 aa).

This is an uncharacterized protein from Gallid herpesvirus 2 (strain GA) (GaHV-2).